We begin with the raw amino-acid sequence, 363 residues long: MDNYTYSELLKSLQNKCDNIALIIKPEKIKQELERIEKEQEDPNFWQDVLKARDTNKEKVRLNRLLETYQKTKNSLDESVELFELAQNDNDEVTLSLLYEEAPILENSVQKVEIEIMLSGENDASNAIITIQPGAGGTESQDWASILYRMYLRWAERRGFKSEILDYQDGEEAGIKGVAFIIKGENAYGYLKNENGVHRLVRISPFDANAKRHTSFASVQISPELDDDIDIEIDEKDVRYDYYRSSGAGGQHVNKTESAVRITHFPTGIVVQCQNDRSQHKNKASALKMLKSKLYELELEKQQSSAKNEEKSEIGWGHQIRSYVLAPYQQVKDARSNTAYSNVEAILDGDIDAILEGVLIAKA.

An N5-methylglutamine modification is found at Gln251.

Belongs to the prokaryotic/mitochondrial release factor family. In terms of processing, methylated by PrmC. Methylation increases the termination efficiency of RF2.

It is found in the cytoplasm. Functionally, peptide chain release factor 2 directs the termination of translation in response to the peptide chain termination codons UGA and UAA. The chain is Peptide chain release factor 2 (prfB) from Helicobacter pylori (strain ATCC 700392 / 26695) (Campylobacter pylori).